The sequence spans 74 residues: Exodeoxyribonuclease 7 small subunit (74 aa).

It belongs to the XseB family. In terms of assembly, heterooligomer composed of large and small subunits.

Its subcellular location is the cytoplasm. The catalysed reaction is Exonucleolytic cleavage in either 5'- to 3'- or 3'- to 5'-direction to yield nucleoside 5'-phosphates.. Functionally, bidirectionally degrades single-stranded DNA into large acid-insoluble oligonucleotides, which are then degraded further into small acid-soluble oligonucleotides. The sequence is that of Exodeoxyribonuclease 7 small subunit from Neisseria meningitidis serogroup A / serotype 4A (strain DSM 15465 / Z2491).